A 263-amino-acid polypeptide reads, in one-letter code: 7beta-hydroxysteroid dehydrogenase (263 aa).

NADP(+)-binding positions include 17 to 21, 40 to 41, and 66 to 67; these read TEGVG, RR, and DF. Tyr156 (proton acceptor) is an active-site residue. Residue Ser240 coordinates NADP(+).

Belongs to the short-chain dehydrogenases/reductases (SDR) family.

It carries out the reaction a 7beta-hydroxysteroid + NADP(+) = a 7-oxosteroid + NADPH + H(+). The enzyme catalyses 7-oxolithocholate + NADPH + H(+) = ursodeoxycholate + NADP(+). Its function is as follows. 7beta-hydroxysteroid dehydrogenase that catalyzes the reduction of the 7-oxo group of 7-oxo-lithocholate (7-oxo-LCA), to yield ursodeoxycholate (UDCA). As R.gnavus is a common core bacterium of the human gut microbiota, this enzyme contributes to the formation of UDCA in the human colon. UDCA is regarded as a chemopreventive beneficial secondary bile acid due to its low hydrophobicity; it protects hepatocytes and bile duct epithelial cells against necrosis and apoptosis induced by more hydrophobic secondary bile acids like deoxycholate (DCA). This enzyme is also able to catalyze the reverse reaction in vitro, i.e. the oxidation of the 7beta-hydroxy group of UDCA to 7-oxo-LCA, but much less efficiently than the reduction reaction. The sequence is that of 7beta-hydroxysteroid dehydrogenase from Mediterraneibacter gnavus (strain ATCC 29149 / DSM 114966 / JCM 6515 / VPI C7-9) (Ruminococcus gnavus).